The sequence spans 184 residues: GTP-binding protein Rheb (184 aa).

A Glycyl lysine isopeptide (Lys-Gly) (interchain with G-Cter in ubiquitin) cross-link involves residue Lys-8. GDP-binding residues include Ser-16 and Val-17. Ser-16 is a binding site for GTP. The GTP site is built by Gly-18, Lys-19, Ser-20, Ser-21, Val-32, Tyr-35, Thr-38, Asn-119, and Asp-122. GDP is bound by residues Lys-19, Ser-20, and Ser-21. Ser-20 serves as a coordination point for Mg(2+). The Effector region motif lies at 35-43; sequence YDPTIENTF. Thr-38 contacts GDP. Thr-38 serves as a coordination point for Mg(2+). Asp-122 contributes to the GDP binding site. Ser-130 carries the phosphoserine; by MAPKAPK5 modification. Ala-150 provides a ligand contact to GDP. Ala-150 serves as a coordination point for GTP. At Cys-181 the chain carries Cysteine methyl ester. Cys-181 carries the S-farnesyl cysteine lipid modification. The propeptide at 182 to 184 is removed in mature form; sequence SVM.

It belongs to the small GTPase superfamily. Rheb family. As to quaternary structure, associates with the mTORC1 complex (MTOR, MLST8 and RPTOR) in a guanyl nucleotide-independent manner. Interacts with TSC2. Interacts with MCRS1; the interaction maintains RHEB at the lysosome in its active GTP-bound form and prevents its interaction with the mTORC1 complex inhibitor TSC2, ensuring activation of the mTORC1 complex by RHEB. Interacts (when prenylated) with PDE6D; this promotes release from membranes. Farnesylation is important for efficiently activating mTORC1-mediated signaling. In terms of processing, polyubiquitinated in response to amino acid, promoting its interaction with MTOR and mTORC1 activation. Deubiquitination by ATXN3 promotes recruitment of the TSC-TBC complex and RHEB inactivation by TSC2. Monoubiquitinated at Lys-8 by RNF152, promoting its association with the TSC-TBC complex. Deubiquitinated at Lys-8 by USP4, promoting mTORC1 activation. Post-translationally, phosphorylation by MAPKAPK5 impairs GTP-binding and inactivation. As to expression, expressed at high levels in normal adult cortex as well as a number of peripheral tissues, including lung and intestine.

It is found in the endomembrane system. The protein localises to the lysosome membrane. The protein resides in the golgi apparatus membrane. It localises to the endoplasmic reticulum membrane. Its subcellular location is the cytoplasm. It is found in the cytosol. It catalyses the reaction GTP + H2O = GDP + phosphate + H(+). Its activity is regulated as follows. Alternates between an inactive form bound to GDP and an active form bound to GTP. Inactivated by the TSC-TBC complex via the GTPase activating protein (GAP) domain of TSC2. Autoinhibited by Tyr-35, which constrains the active site conformation, restricting the access of the catalytic Asp-65 to the nucleotide-binding pocket. In terms of biological role, small GTPase that acts as an allosteric activator of the canonical mTORC1 complex, an evolutionarily conserved central nutrient sensor that stimulates anabolic reactions and macromolecule biosynthesis to promote cellular biomass generation and growth. In response to nutrients, growth factors or amino acids, specifically activates the protein kinase activity of MTOR, the catalytic component of the mTORC1 complex: acts by causing a conformational change that allows the alignment of residues in the active site of MTOR, thereby enhancing the phosphorylation of ribosomal protein S6 kinase (RPS6KB1 and RPS6KB2) and EIF4EBP1 (4E-BP1). RHEB is also required for localization of the TSC-TBC complex to lysosomal membranes. In response to starvation, RHEB is inactivated by the TSC-TBC complex, preventing activation of mTORC1. Has low intrinsic GTPase activity. In Rattus norvegicus (Rat), this protein is GTP-binding protein Rheb.